Consider the following 754-residue polypeptide: Elongation factor G-2, mitochondrial (754 aa).

In terms of domain architecture, tr-type G spans 63–340; the sequence is DKLRNIGISA…GVVSFLPSPN (278 aa). GTP contacts are provided by residues 72–79, 139–143, and 193–196; these read AHIDSGKT, DTPGH, and NKLD.

This sequence belongs to the TRAFAC class translation factor GTPase superfamily. Classic translation factor GTPase family. EF-G/EF-2 subfamily. In terms of tissue distribution, expressed in cotyledons and adult leaves at the same levels.

It is found in the mitochondrion. It functions in the pathway protein biosynthesis; polypeptide chain elongation. Mitochondrial GTPase that catalyzes the GTP-dependent ribosomal translocation step during translation elongation. During this step, the ribosome changes from the pre-translocational (PRE) to the post-translocational (POST) state as the newly formed A-site-bound peptidyl-tRNA and P-site-bound deacylated tRNA move to the P and E sites, respectively. Catalyzes the coordinated movement of the two tRNA molecules, the mRNA and conformational changes in the ribosome. The polypeptide is Elongation factor G-2, mitochondrial (MEFG2) (Arabidopsis thaliana (Mouse-ear cress)).